Reading from the N-terminus, the 226-residue chain is Putative DNA repair protein recA homolog 4 (226 aa).

G41–T48 is an ATP binding site.

Belongs to the RecA family.

The protein resides in the cytoplasm. Its function is as follows. Involved in recombination ability and DNA strand transfer activity. This chain is Putative DNA repair protein recA homolog 4, found in Arabidopsis thaliana (Mouse-ear cress).